The chain runs to 99 residues: Malonate decarboxylase acyl carrier protein (99 aa).

Serine 25 is modified (O-(phosphoribosyl dephospho-coenzyme A)serine).

It belongs to the MdcC family. In terms of processing, covalently binds the prosthetic group of malonate decarboxylase.

The protein resides in the cytoplasm. Subunit of malonate decarboxylase, it is an acyl carrier protein to which acetyl and malonyl thioester residues are bound via a 2'-(5''-phosphoribosyl)-3'-dephospho-CoA prosthetic group and turn over during the catalytic mechanism. The polypeptide is Malonate decarboxylase acyl carrier protein (Pseudomonas putida (strain W619)).